Reading from the N-terminus, the 416-residue chain is Phosphoglycerate kinase (416 aa).

Residues 28–30 (DMN), Arg-44, 65–68 (HQSR), Arg-122, and Arg-162 each bind substrate. Residues Glu-337 and 362–365 (GGHI) each bind ATP.

Belongs to the phosphoglycerate kinase family. In terms of assembly, monomer.

It localises to the cytoplasm. The catalysed reaction is (2R)-3-phosphoglycerate + ATP = (2R)-3-phospho-glyceroyl phosphate + ADP. The protein operates within carbohydrate degradation; glycolysis; pyruvate from D-glyceraldehyde 3-phosphate: step 2/5. In Methanosarcina mazei (strain ATCC BAA-159 / DSM 3647 / Goe1 / Go1 / JCM 11833 / OCM 88) (Methanosarcina frisia), this protein is Phosphoglycerate kinase.